We begin with the raw amino-acid sequence, 357 residues long: tRNA-specific 2-thiouridylase MnmA (357 aa).

ATP is bound by residues 8–15 and Ile34; that span reads GISGGVDS. The active-site Nucleophile is Cys96. Cys96 and Cys192 are oxidised to a cystine. Gly120 serves as a coordination point for ATP. The segment at 142–144 is interaction with tRNA; that stretch reads KDQ. Cys192 serves as the catalytic Cysteine persulfide intermediate. The tract at residues 301–302 is interaction with tRNA; it reads RY.

Belongs to the MnmA/TRMU family.

It is found in the cytoplasm. The catalysed reaction is S-sulfanyl-L-cysteinyl-[protein] + uridine(34) in tRNA + AH2 + ATP = 2-thiouridine(34) in tRNA + L-cysteinyl-[protein] + A + AMP + diphosphate + H(+). Catalyzes the 2-thiolation of uridine at the wobble position (U34) of tRNA, leading to the formation of s(2)U34. In Chlorobium phaeobacteroides (strain DSM 266 / SMG 266 / 2430), this protein is tRNA-specific 2-thiouridylase MnmA.